The sequence spans 843 residues: Major vault protein alpha (843 aa).

Ala-2 is modified (N-acetylalanine). MVP repeat units follow at residues 2–56 (ADLN…IPQR), 57–111 (NYCT…KVTA), 112–163 (LQVV…EEIK), 164–216 (ATII…EIVN), 217–272 (AYVL…GEVH), 273–324 (ITTL…IHNI), 325–376 (YVLT…KRES), 377–442 (IPLD…STRV), and 443–505 (VTYR…FLGP). Positions 643–663 (QEAAARHEAERLEQGARGRLE) are disordered. A compositionally biased stretch (basic and acidic residues) spans 646–663 (AARHEAERLEQGARGRLE).

In terms of assembly, the vault ribonucleoprotein particle is a huge (400 A x 670 A) cage structure of 12.9 MDa. It consists of a dimer of half-vaults, with each half-vault comprising 39 identical major vault protein (MVP) chains. Dictyostelium is one of the few organisms in which the major component is actually two proteins (alpha and beta).

Its subcellular location is the cytoplasm. It localises to the nucleus. Unknown, though MVP-alpha is required for normal vault structure. The chain is Major vault protein alpha (mvpA) from Dictyostelium discoideum (Social amoeba).